The chain runs to 383 residues: ATP phosphoribosyltransferase regulatory subunit (383 aa).

The protein belongs to the class-II aminoacyl-tRNA synthetase family. HisZ subfamily. In terms of assembly, heteromultimer composed of HisG and HisZ subunits.

Its subcellular location is the cytoplasm. Its pathway is amino-acid biosynthesis; L-histidine biosynthesis; L-histidine from 5-phospho-alpha-D-ribose 1-diphosphate: step 1/9. In terms of biological role, required for the first step of histidine biosynthesis. May allow the feedback regulation of ATP phosphoribosyltransferase activity by histidine. This Cupriavidus pinatubonensis (strain JMP 134 / LMG 1197) (Cupriavidus necator (strain JMP 134)) protein is ATP phosphoribosyltransferase regulatory subunit.